The primary structure comprises 268 residues: Putative type I specificity subunit S.MpnORF365P (268 aa).

The protein belongs to the type-I restriction system S methylase family. As to quaternary structure, the methyltransferase is composed of M and S polypeptides.

Its function is as follows. The specificity (S) subunit of a type I methyltransferase (MTase); this subunit dictates DNA sequence specificity. The single R subunit has multiple frameshifts and is probably not expressed. The chain is Putative type I specificity subunit S.MpnORF365P from Mycoplasma pneumoniae (strain ATCC 29342 / M129 / Subtype 1) (Mycoplasmoides pneumoniae).